Reading from the N-terminus, the 163-residue chain is Lipoprotein signal peptidase (163 aa).

3 helical membrane-spanning segments follow: residues 3-23 (IPLI…IIIL), 70-90 (NYIL…TMYN), and 94-114 (IENF…IGNF). Catalysis depends on residues Asp125 and Asp143. Residues 134-154 (WHFATFNIADVSIFIGSVLFI) form a helical membrane-spanning segment.

This sequence belongs to the peptidase A8 family.

Its subcellular location is the cell membrane. The enzyme catalyses Release of signal peptides from bacterial membrane prolipoproteins. Hydrolyzes -Xaa-Yaa-Zaa-|-(S,diacylglyceryl)Cys-, in which Xaa is hydrophobic (preferably Leu), and Yaa (Ala or Ser) and Zaa (Gly or Ala) have small, neutral side chains.. The protein operates within protein modification; lipoprotein biosynthesis (signal peptide cleavage). Its function is as follows. This protein specifically catalyzes the removal of signal peptides from prolipoproteins. This Buchnera aphidicola subsp. Baizongia pistaciae (strain Bp) protein is Lipoprotein signal peptidase.